A 498-amino-acid chain; its full sequence is ATP synthase subunit beta, chloroplastic (498 aa).

172 to 179 (GGAGVGKT) lines the ATP pocket.

The protein belongs to the ATPase alpha/beta chains family. F-type ATPases have 2 components, CF(1) - the catalytic core - and CF(0) - the membrane proton channel. CF(1) has five subunits: alpha(3), beta(3), gamma(1), delta(1), epsilon(1). CF(0) has four main subunits: a(1), b(1), b'(1) and c(9-12).

The protein localises to the plastid. The protein resides in the chloroplast thylakoid membrane. The enzyme catalyses ATP + H2O + 4 H(+)(in) = ADP + phosphate + 5 H(+)(out). Its function is as follows. Produces ATP from ADP in the presence of a proton gradient across the membrane. The catalytic sites are hosted primarily by the beta subunits. In Carica papaya (Papaya), this protein is ATP synthase subunit beta, chloroplastic.